The sequence spans 294 residues: N-acetylmuramic acid 6-phosphate etherase (294 aa).

In terms of domain architecture, SIS spans 54 to 217; it reads VIKSFEEEGR…STASMIGVGK (164 aa). The active-site Proton donor is the Glu-82. The active site involves Glu-113.

The protein belongs to the GCKR-like family. MurNAc-6-P etherase subfamily. In terms of assembly, homodimer.

The enzyme catalyses N-acetyl-D-muramate 6-phosphate + H2O = N-acetyl-D-glucosamine 6-phosphate + (R)-lactate. It participates in amino-sugar metabolism; N-acetylmuramate degradation. Functionally, specifically catalyzes the cleavage of the D-lactyl ether substituent of MurNAc 6-phosphate, producing GlcNAc 6-phosphate and D-lactate. This is N-acetylmuramic acid 6-phosphate etherase from Bacillus cereus (strain G9842).